An 801-amino-acid chain; its full sequence is MAGLSTPHQFDHPTALAAAVLTDDNRVIVMVIGVVALAALVVAGILVRQVLAAGEGTDSMKKIAAAVQEGANAYLGRQMRTLGVFAVVVFFLLMLLPADDWNQRAGRSVFFLIGALFSATTGYTGMWLAVRSNVRVAAAAREATPAEGEPEKDLTAVSHKAMKIAFRTGGVVGMFTVGLGLLGASCVVLVYAADAPKVLEGFGLGAALIAMFMRVGGGIFTKAADVGADLVGKVEQGIPEDDPRNAATIADNVGDNVGDCAGMAADLFESYAVTLVAALILGKAAFGDSGLAFPLIVPAIGVLTAMIGIFAVAPRRADRSGMSAINRGFFVSAVFSLALVAVAVYVYLPGKYADLDGVTDVAIRAKDGDPRILAMVAVAIGIVLAALIQQLTGYFTETTRRPVRDIGKSSLTGAATVVLAGISVGLESAVYTALLIGLGVYGAFLLGGTSIMLALFAVALAGTGLLTTVGVIVAMDTFGPVSDNAQGIAEMSGDVTGAGAQVLTDLDAVGNTTKAITKGIAIATAVLAASALFGSYRDAITTAANDVGEKVSGAGAPMNLMMDISQPNNLVGLIAGAAVVFLFSGLAINAVSRSAGAVVYEVRRQFREHPGIMDYTEQPEYGRVVDICTKDALRELATPGLLAVLAPIAIGFTLGVGALGAYLAGAIGTGTLMAVFLANSGGAWDNAKKLVEDGHHGGKGSEAHAATVIGDTVGDPFKDTAGPAINPLLKVMNLVALLIAPAVVKFSYGEDKNLGVRIAIAVLSILVIVGAVYISKRRGIAVGDEGNAERVTKSADPAVVS.

5 consecutive transmembrane segments (helical) span residues 27-47 (VIVMVIGVVALAALVVAGILV), 81-101 (TLGVFAVVVFFLLMLLPADDW), 109-129 (VFFLIGALFSATTGYTGMWLA), 170-190 (GVVGMFTVGLGLLGASCVVLV), and 201-221 (GFGLGAALIAMFMRVGGGIFT). Residue Lys222 coordinates substrate. Asp225, Asp229, Asn252, and Asp255 together coordinate Mg(2+). 7 helical membrane passes run 261–281 (AGMAADLFESYAVTLVAALIL), 292–312 (AFPLIVPAIGVLTAMIGIFAV), 328–348 (GFFVSAVFSLALVAVAVYVYL), 372–392 (ILAMVAVAIGIVLAALIQQLT), 406–426 (IGKSSLTGAATVVLAGISVGL), 429–449 (AVYTALLIGLGVYGAFLLGGT), and 453–473 (LALFAVALAGTGLLTTVGVIV). Asp483 contacts Mg(2+). 4 helical membrane-spanning segments follow: residues 515-535 (AITKGIAIATAVLAASALFGS), 571-591 (VGLIAGAAVVFLFSGLAINAV), 641-661 (LLAVLAPIAIGFTLGVGALGA), and 663-683 (LAGAIGTGTLMAVFLANSGGA). 3 residues coordinate Ca(2+): Asp685, Asp711, and Asp715. Lys718 contributes to the substrate binding site. The next 2 membrane-spanning stretches (helical) occupy residues 724–744 (AINPLLKVMNLVALLIAPAVV) and 754–774 (LGVRIAIAVLSILVIVGAVYI).

The protein belongs to the H(+)-translocating pyrophosphatase (TC 3.A.10) family. K(+)-insensitive subfamily. In terms of assembly, homodimer. Requires Mg(2+) as cofactor.

The protein resides in the cell membrane. It carries out the reaction diphosphate + H2O + H(+)(in) = 2 phosphate + 2 H(+)(out). Proton pump that utilizes the energy of pyrophosphate hydrolysis as the driving force for proton movement across the membrane. Generates a proton motive force. The polypeptide is K(+)-insensitive pyrophosphate-energized proton pump (Streptomyces avermitilis (strain ATCC 31267 / DSM 46492 / JCM 5070 / NBRC 14893 / NCIMB 12804 / NRRL 8165 / MA-4680)).